The sequence spans 91 residues: MHPGGKGHCGPPPGHGPGHCHEGHHPPGPGGPHPGHGPGHCPGGHHPPGHGGPSHGHGPGHCPGGHHPPGHGGPSHGHGPGHCGPHPGPHH.

The tract at residues 1–91 (MHPGGKGHCG…HCGPHPGPHH (91 aa)) is disordered. Gly residues-rich tracts occupy residues 33–42 (HPGHGPGHCP), 49–63 (GHGGPSHGHGPGHCP), and 70–82 (GHGGPSHGHGPGH).

In Mus musculus (Mouse), this protein is Proline, histidine and glycine-rich protein 1 (Phgr1).